We begin with the raw amino-acid sequence, 369 residues long: S-(hydroxymethyl)glutathione dehydrogenase (369 aa).

Residues Cys40, His62, Cys92, Cys95, Cys98, Cys106, and Cys169 each coordinate Zn(2+).

It belongs to the zinc-containing alcohol dehydrogenase family. Class-III subfamily. As to quaternary structure, homodimer. Requires Zn(2+) as cofactor.

It localises to the cytoplasm. It carries out the reaction S-(hydroxymethyl)glutathione + NADP(+) = S-formylglutathione + NADPH + H(+). The enzyme catalyses S-(hydroxymethyl)glutathione + NAD(+) = S-formylglutathione + NADH + H(+). It catalyses the reaction a primary alcohol + NAD(+) = an aldehyde + NADH + H(+). The catalysed reaction is a secondary alcohol + NAD(+) = a ketone + NADH + H(+). It carries out the reaction S-nitrosoglutathione + NADH + H(+) = S-(hydroxysulfenamide)glutathione + NAD(+). Its function is as follows. Has high formaldehyde dehydrogenase activity in the presence of glutathione and catalyzes the oxidation of normal alcohols in a reaction that is not GSH-dependent. In addition, hemithiolacetals other than those formed from GSH, including omega-thiol fatty acids, also are substrates. Also acts as a S-nitroso-glutathione reductase by catalyzing the NADH-dependent reduction of S-nitrosoglutathione. The protein is S-(hydroxymethyl)glutathione dehydrogenase (frmA) of Escherichia coli O6:H1 (strain CFT073 / ATCC 700928 / UPEC).